The following is a 446-amino-acid chain: Phosphoglucosamine mutase (446 aa).

The active-site Phosphoserine intermediate is the Ser103. Mg(2+) contacts are provided by Ser103, Asp242, Asp244, and Asp246. A Phosphoserine modification is found at Ser103.

Belongs to the phosphohexose mutase family. Requires Mg(2+) as cofactor. Post-translationally, activated by phosphorylation.

The catalysed reaction is alpha-D-glucosamine 1-phosphate = D-glucosamine 6-phosphate. Its function is as follows. Catalyzes the conversion of glucosamine-6-phosphate to glucosamine-1-phosphate. The protein is Phosphoglucosamine mutase of Vibrio vulnificus (strain CMCP6).